Consider the following 378-residue polypeptide: Queuine tRNA-ribosyltransferase (378 aa).

The active-site Proton acceptor is the Asp-90. Residues 90–94 (DSGGF), Asp-144, Gln-188, and Gly-220 contribute to the substrate site. Residues 251 to 257 (GVGTPED) are RNA binding. Asp-270 serves as the catalytic Nucleophile. Residues 275-279 (TRNAR) are RNA binding; important for wobble base 34 recognition. 4 residues coordinate Zn(2+): Cys-308, Cys-310, Cys-313, and His-339.

The protein belongs to the queuine tRNA-ribosyltransferase family. As to quaternary structure, homodimer. Within each dimer, one monomer is responsible for RNA recognition and catalysis, while the other monomer binds to the replacement base PreQ1. Zn(2+) is required as a cofactor.

It carries out the reaction 7-aminomethyl-7-carbaguanine + guanosine(34) in tRNA = 7-aminomethyl-7-carbaguanosine(34) in tRNA + guanine. The protein operates within tRNA modification; tRNA-queuosine biosynthesis. In terms of biological role, catalyzes the base-exchange of a guanine (G) residue with the queuine precursor 7-aminomethyl-7-deazaguanine (PreQ1) at position 34 (anticodon wobble position) in tRNAs with GU(N) anticodons (tRNA-Asp, -Asn, -His and -Tyr). Catalysis occurs through a double-displacement mechanism. The nucleophile active site attacks the C1' of nucleotide 34 to detach the guanine base from the RNA, forming a covalent enzyme-RNA intermediate. The proton acceptor active site deprotonates the incoming PreQ1, allowing a nucleophilic attack on the C1' of the ribose to form the product. After dissociation, two additional enzymatic reactions on the tRNA convert PreQ1 to queuine (Q), resulting in the hypermodified nucleoside queuosine (7-(((4,5-cis-dihydroxy-2-cyclopenten-1-yl)amino)methyl)-7-deazaguanosine). In Nautilia profundicola (strain ATCC BAA-1463 / DSM 18972 / AmH), this protein is Queuine tRNA-ribosyltransferase.